Consider the following 396-residue polypeptide: tRNA (guanine-N(7)-)-methyltransferase non-catalytic subunit wdr4 (396 aa).

WD repeat units lie at residues 52–91 (HGSDKILAAAFSPSGEYFALTDDNKRLVLFRTKPAWEKIS), 94–133 (WVSRRCTALTFSPCGNHILVADKSGDVFSFSVPRALEQGR), 137–178 (GHLS…MSFC), and 180–220 (GHTE…EVHS).

It belongs to the WD repeat TRM82 family. Non-catalytic component of the METTL1-WDR4 complex, composed of mettl1 and wdr4.

It is found in the nucleus. The protein operates within tRNA modification; N(7)-methylguanine-tRNA biosynthesis. Functionally, non-catalytic component of the METTL1-WDR4 methyltransferase complex required for the formation of N(7)-methylguanine in a subset of RNA species, such as tRNAs, mRNAs and microRNAs (miRNAs). In the METTL1-WDR4 methyltransferase complex, wdr4 acts as a scaffold for tRNA-binding. Required for the formation of N(7)-methylguanine at position 46 (m7G46) in a large subset of tRNAs that contain the 5'-RAGGU-3' motif within the variable loop. M7G46 interacts with C13-G22 in the D-loop to stabilize tRNA tertiary structure and protect tRNAs from decay. Also required for the formation of N(7)-methylguanine at internal sites in a subset of mRNAs. Also required for methylation of a specific subset of miRNAs. This is tRNA (guanine-N(7)-)-methyltransferase non-catalytic subunit wdr4 (wdr4) from Xenopus laevis (African clawed frog).